Consider the following 543-residue polypeptide: Lipoyl synthase, apicoplast (543 aa).

The signal sequence occupies residues 1–63; that stretch reads MAYFFDFPTD…LFSLLSASQS (63 aa). [4Fe-4S] cluster-binding residues include Cys-252, Cys-257, Cys-263, Cys-278, Cys-282, Cys-285, and Ser-493. Residues 264–482 enclose the Radical SAM core domain; sequence WNGGTATLIL…QDIAEEMGFK (219 aa).

This sequence belongs to the radical SAM superfamily. Lipoyl synthase family. Requires [4Fe-4S] cluster as cofactor.

The protein resides in the plastid. It localises to the apicoplast. It carries out the reaction [[Fe-S] cluster scaffold protein carrying a second [4Fe-4S](2+) cluster] + N(6)-octanoyl-L-lysyl-[protein] + 2 oxidized [2Fe-2S]-[ferredoxin] + 2 S-adenosyl-L-methionine + 4 H(+) = [[Fe-S] cluster scaffold protein] + N(6)-[(R)-dihydrolipoyl]-L-lysyl-[protein] + 4 Fe(3+) + 2 hydrogen sulfide + 2 5'-deoxyadenosine + 2 L-methionine + 2 reduced [2Fe-2S]-[ferredoxin]. It participates in protein modification; protein lipoylation via endogenous pathway; protein N(6)-(lipoyl)lysine from octanoyl-[acyl-carrier-protein]: step 2/2. In terms of biological role, catalyzes the radical-mediated insertion of two sulfur atoms into the C-6 and C-8 positions of the octanoyl moiety bound to the lipoyl domains of lipoate-dependent enzymes, thereby converting the octanoylated domains into lipoylated derivatives. The chain is Lipoyl synthase, apicoplast from Toxoplasma gondii.